Reading from the N-terminus, the 171-residue chain is MSVLNVLIYPDERLKTIAEPVTEFNDELQTFIDDMFETMYQEEGIGLAATQVDVHKRVITIDITGEKTEQLVLINPELLDGEGETGIEEGCLSLPGLRGFVPRKEKVTVKALNRQGEEFTLHADGLLAICIQHEIDHLNGIVFADYLSPLKRNRMKEKLVKLQKQISRHQA.

Cysteine 91 and histidine 133 together coordinate Fe cation. The active site involves glutamate 134. A Fe cation-binding site is contributed by histidine 137.

It belongs to the polypeptide deformylase family. Fe(2+) is required as a cofactor.

It catalyses the reaction N-terminal N-formyl-L-methionyl-[peptide] + H2O = N-terminal L-methionyl-[peptide] + formate. Functionally, removes the formyl group from the N-terminal Met of newly synthesized proteins. Requires at least a dipeptide for an efficient rate of reaction. N-terminal L-methionine is a prerequisite for activity but the enzyme has broad specificity at other positions. This is Peptide deformylase from Mannheimia succiniciproducens (strain KCTC 0769BP / MBEL55E).